Consider the following 242-residue polypeptide: Adenosylcobinamide-GDP ribazoletransferase (242 aa).

5 consecutive transmembrane segments (helical) span residues 31–51 (LLFY…LSTA), 52–72 (LMGA…VLLS), 109–129 (IAVV…VALI), 134–154 (GAAL…LFLT), and 188–208 (ILIG…CFIG).

This sequence belongs to the CobS family. It depends on Mg(2+) as a cofactor.

The protein resides in the cell inner membrane. It catalyses the reaction alpha-ribazole + adenosylcob(III)inamide-GDP = adenosylcob(III)alamin + GMP + H(+). It carries out the reaction alpha-ribazole 5'-phosphate + adenosylcob(III)inamide-GDP = adenosylcob(III)alamin 5'-phosphate + GMP + H(+). The protein operates within cofactor biosynthesis; adenosylcobalamin biosynthesis; adenosylcobalamin from cob(II)yrinate a,c-diamide: step 7/7. Its function is as follows. Joins adenosylcobinamide-GDP and alpha-ribazole to generate adenosylcobalamin (Ado-cobalamin). Also synthesizes adenosylcobalamin 5'-phosphate from adenosylcobinamide-GDP and alpha-ribazole 5'-phosphate. The polypeptide is Adenosylcobinamide-GDP ribazoletransferase (Pseudomonas fluorescens (strain SBW25)).